The following is a 262-amino-acid chain: Imidazole glycerol phosphate synthase subunit HisF (262 aa).

Residues Asp11 and Asp130 contribute to the active site.

Belongs to the HisA/HisF family. Heterodimer of HisH and HisF.

The protein localises to the cytoplasm. It catalyses the reaction 5-[(5-phospho-1-deoxy-D-ribulos-1-ylimino)methylamino]-1-(5-phospho-beta-D-ribosyl)imidazole-4-carboxamide + L-glutamine = D-erythro-1-(imidazol-4-yl)glycerol 3-phosphate + 5-amino-1-(5-phospho-beta-D-ribosyl)imidazole-4-carboxamide + L-glutamate + H(+). It participates in amino-acid biosynthesis; L-histidine biosynthesis; L-histidine from 5-phospho-alpha-D-ribose 1-diphosphate: step 5/9. IGPS catalyzes the conversion of PRFAR and glutamine to IGP, AICAR and glutamate. The HisF subunit catalyzes the cyclization activity that produces IGP and AICAR from PRFAR using the ammonia provided by the HisH subunit. The polypeptide is Imidazole glycerol phosphate synthase subunit HisF (Rhodopirellula baltica (strain DSM 10527 / NCIMB 13988 / SH1)).